The chain runs to 182 residues: Homeobox expressed in ES cells 1-A (182 aa).

Residues 103 to 163 (YRGRRPRTAF…QNRRAKLKRS (61 aa)) constitute a DNA-binding region (homeobox).

It belongs to the ANF homeobox family. Initially expressed in the anterior dorsal region of early embryos and later exclusively in the primordium of the anterior pituitary gland.

It is found in the nucleus. Functionally, appears to be involved in the regional specification of the anterior head of Xenopus embryos. This is Homeobox expressed in ES cells 1-A (hesx1-a) from Xenopus laevis (African clawed frog).